Reading from the N-terminus, the 464-residue chain is MALLTAATRLLGAKNSSCLVLAARHASASSTNLKDVLSNLIPKEQARIKTFKQQHGKTVVGQITVDMMYGGMRGMKGLVYETSVLDPDEGIRFRGYSIPECQKMLPKAKGGEEPLPEGLFWLLVTGQMPTEEQVSWLSREWAKRAALPSHVVTMLDNFPTNLHPMSQLSAAITALNSESNFARAYAEGMNRAKYWELIYEDCMDLIAKLPCVAAKIYRNLYREGSSIGAIDSRLDWSHNFTNMLGYTDPQFTELMRLYLTIHSDHEGGNVSAHTSHLVGSALSDPYLSFAAAMNGLAGPLHGLANQEVLVWLTQLQKEVGKDVSDEKLRDYIWNTLNSGRVVPGYGHAVLRKTDPRYSCQREFALKHLPKDPMFKLVAQLYKIVPNILLEQGKAKNPWPNVDAHSGVLLQYYGMTEMNYYTVLFGVSRALGVLAQLIWSRALGFPLERPKSMSTDGLMKFVDSK.

The transit peptide at 1 to 27 (MALLTAATRLLGAKNSSCLVLAARHAS) directs the protein to the mitochondrion. The short motif at 2 to 21 (ALLTAATRLLGAKNSSCLVL) is the SIFI-degron element. N6-succinyllysine is present on Lys-57. At Lys-76 the chain carries N6-acetyllysine; alternate. Lys-76 is modified (N6-succinyllysine; alternate). N6-succinyllysine is present on residues Lys-103 and Lys-193. At Ser-226 the chain carries Phosphoserine. Residue His-301 is part of the active site. N6-acetyllysine; alternate is present on residues Lys-321 and Lys-327. 2 positions are modified to N6-succinyllysine; alternate: Lys-321 and Lys-327. His-347 is an active-site residue. An oxaloacetate-binding site is contributed by Arg-356. Lys-375 is subject to N6-acetyllysine; alternate. Residue Lys-375 is modified to N6-succinyllysine; alternate. An N6-acetyllysine modification is found at Lys-382. Lys-393 is subject to N6-acetyllysine; alternate. Lys-393 is modified (N6-succinyllysine; alternate). N6,N6,N6-trimethyllysine is present on Lys-395. Asp-402 is an active-site residue. Residues Arg-428 and Arg-448 each coordinate oxaloacetate. Position 450 is an N6-succinyllysine (Lys-450). At Lys-459 the chain carries N6-acetyllysine; alternate. The residue at position 459 (Lys-459) is an N6-succinyllysine; alternate.

Belongs to the citrate synthase family. Homodimer. Methylated. Trimethylation at Lys-395 by CSKMT decreases citrate synthase activity. Post-translationally, in response to mitochondrial stress, the precursor protein is ubiquitinated by the SIFI complex in the cytoplasm before mitochondrial import, leading to its degradation. Within the SIFI complex, UBR4 initiates ubiquitin chain that are further elongated or branched by KCMF1.

It is found in the mitochondrion matrix. It carries out the reaction oxaloacetate + acetyl-CoA + H2O = citrate + CoA + H(+). Its pathway is carbohydrate metabolism; tricarboxylic acid cycle; isocitrate from oxaloacetate: step 1/2. Key enzyme of the Krebs tricarboxylic acid cycle which catalyzes the synthesis of citrate from acetyl coenzyme A and oxaloacetate. The polypeptide is Citrate synthase, mitochondrial (Cs) (Mus musculus (Mouse)).